Consider the following 255-residue polypeptide: Triosephosphate isomerase (255 aa).

9 to 11 (NWK) contributes to the substrate binding site. Catalysis depends on His-96, which acts as the Electrophile. The active-site Proton acceptor is the Glu-170. Substrate is bound by residues Gly-176, Ser-216, and 237–238 (GG).

Belongs to the triosephosphate isomerase family. Homodimer.

It localises to the cytoplasm. It carries out the reaction D-glyceraldehyde 3-phosphate = dihydroxyacetone phosphate. Its pathway is carbohydrate biosynthesis; gluconeogenesis. The protein operates within carbohydrate degradation; glycolysis; D-glyceraldehyde 3-phosphate from glycerone phosphate: step 1/1. Functionally, involved in the gluconeogenesis. Catalyzes stereospecifically the conversion of dihydroxyacetone phosphate (DHAP) to D-glyceraldehyde-3-phosphate (G3P). The protein is Triosephosphate isomerase of Magnetococcus marinus (strain ATCC BAA-1437 / JCM 17883 / MC-1).